Reading from the N-terminus, the 429-residue chain is Probable M18 family aminopeptidase 2 (429 aa).

Residues His-82, His-156, and His-401 each contribute to the Zn(2+) site.

Belongs to the peptidase M18 family. The cofactor is Zn(2+).

This chain is Probable M18 family aminopeptidase 2, found in Pseudomonas putida (strain ATCC 700007 / DSM 6899 / JCM 31910 / BCRC 17059 / LMG 24140 / F1).